We begin with the raw amino-acid sequence, 159 residues long: Phosphopantetheine adenylyltransferase (159 aa).

Ser-9 is a binding site for substrate. Residues 9-10 (SF) and His-17 each bind ATP. 3 residues coordinate substrate: Lys-41, Leu-74, and Lys-88. Residues 89 to 91 (GLR), Glu-99, and 123 to 129 (YGYISST) contribute to the ATP site.

This sequence belongs to the bacterial CoaD family. As to quaternary structure, homohexamer. It depends on Mg(2+) as a cofactor.

The protein resides in the cytoplasm. It catalyses the reaction (R)-4'-phosphopantetheine + ATP + H(+) = 3'-dephospho-CoA + diphosphate. It functions in the pathway cofactor biosynthesis; coenzyme A biosynthesis; CoA from (R)-pantothenate: step 4/5. In terms of biological role, reversibly transfers an adenylyl group from ATP to 4'-phosphopantetheine, yielding dephospho-CoA (dPCoA) and pyrophosphate. This is Phosphopantetheine adenylyltransferase from Corynebacterium diphtheriae (strain ATCC 700971 / NCTC 13129 / Biotype gravis).